Here is a 21-residue protein sequence, read N- to C-terminus: Paulistine (21 aa).

Cysteine 7 and cysteine 14 are disulfide-bonded. Residue threonine 21 is modified to Threonine amide.

The protein belongs to the sylv/frat/paul family. In terms of processing, occurs in oxidized and reduced states which are thought to adopt a compact globular and linear structure, respectively.

In terms of biological role, induces transient hyperalgesia and paw edema in mice. Probably exerts its effects via different pathways in an oxidation state-dependent way. The sequence is that of Paulistine from Polybia paulista (Neotropical social wasp).